A 514-amino-acid chain; its full sequence is 2,3-bisphosphoglycerate-independent phosphoglycerate mutase (514 aa).

2 residues coordinate Mn(2+): Asp14 and Ser64. Catalysis depends on Ser64, which acts as the Phosphoserine intermediate. Residues His125, 155–156 (RD), Arg187, Arg193, 263–266 (RADR), and Lys336 each bind substrate. Mn(2+)-binding residues include Asp403, His407, Asp444, His445, and His463.

It belongs to the BPG-independent phosphoglycerate mutase family. In terms of assembly, monomer. It depends on Mn(2+) as a cofactor.

The enzyme catalyses (2R)-2-phosphoglycerate = (2R)-3-phosphoglycerate. The protein operates within carbohydrate degradation; glycolysis; pyruvate from D-glyceraldehyde 3-phosphate: step 3/5. In terms of biological role, catalyzes the interconversion of 2-phosphoglycerate and 3-phosphoglycerate. The chain is 2,3-bisphosphoglycerate-independent phosphoglycerate mutase from Enterobacter sp. (strain 638).